The primary structure comprises 394 residues: Subtilisin-like protease CPC735_005570 (394 aa).

The signal sequence occupies residues 1–21 (MRAIISVALFLSLSLLSAVNA). A propeptide spanning residues 22–114 (AEILSAGDTD…IEHDRIANAR (93 aa)) is cleaved from the precursor. One can recognise an Inhibitor I9 domain in the interval 37–110 (SYIVVMRDGL…AVKYIEHDRI (74 aa)). The 272-residue stretch at 123–394 (GWNLARISHK…RLLLYNGSGR (272 aa)) folds into the Peptidase S8 domain. Catalysis depends on charge relay system residues Asp-155 and His-186. Asn-216 and Asn-247 each carry an N-linked (GlcNAc...) asparagine glycan. Ser-340 (charge relay system) is an active-site residue. N-linked (GlcNAc...) asparagine glycans are attached at residues Asn-382 and Asn-390.

Belongs to the peptidase S8 family.

The protein resides in the secreted. In terms of biological role, secreted subtilisin-like serine protease with keratinolytic activity that contributes to pathogenicity. This Coccidioides posadasii (strain C735) (Valley fever fungus) protein is Subtilisin-like protease CPC735_005570.